Here is a 229-residue protein sequence, read N- to C-terminus: uncharacterized protein (229 aa).

The S4 RNA-binding domain occupies 2-69; it reads QRLAKLISNA…KSRLWIYYKP (68 aa). D102 functions as the Nucleophile in the catalytic mechanism.

Belongs to the pseudouridine synthase RsuA family.

The enzyme catalyses a uridine in RNA = a pseudouridine in RNA. This is an uncharacterized protein from Rickettsia bellii (strain RML369-C).